The chain runs to 176 residues: NAD(P)H-quinone oxidoreductase subunit 6, chloroplastic (176 aa).

5 helical membrane-spanning segments follow: residues 10 to 30 (FLLVFLGLGLILGGLGVVLLA), 32 to 52 (PIYSAFSLGLVFVCISLFYIL), 61 to 81 (AQLLIYVGAINVLIIFAVMFI), 92 to 112 (LWTVGDGVTSVVCTSLFVSLI), and 152 to 172 (FFIPFEFISIILLVALIGAIA).

The protein belongs to the complex I subunit 6 family. In terms of assembly, NDH is composed of at least 16 different subunits, 5 of which are encoded in the nucleus.

It is found in the plastid. Its subcellular location is the chloroplast thylakoid membrane. The catalysed reaction is a plastoquinone + NADH + (n+1) H(+)(in) = a plastoquinol + NAD(+) + n H(+)(out). It catalyses the reaction a plastoquinone + NADPH + (n+1) H(+)(in) = a plastoquinol + NADP(+) + n H(+)(out). Functionally, NDH shuttles electrons from NAD(P)H:plastoquinone, via FMN and iron-sulfur (Fe-S) centers, to quinones in the photosynthetic chain and possibly in a chloroplast respiratory chain. The immediate electron acceptor for the enzyme in this species is believed to be plastoquinone. Couples the redox reaction to proton translocation, and thus conserves the redox energy in a proton gradient. In Helianthus annuus (Common sunflower), this protein is NAD(P)H-quinone oxidoreductase subunit 6, chloroplastic (ndhG).